Reading from the N-terminus, the 918-residue chain is GPI ethanolamine phosphate transferase 3 (918 aa).

The helical transmembrane segment at 16–36 threads the bilayer; that stretch reads IGTWKYIQACIFFAIILISNF. Residues Asn-54, Asn-71, Asn-101, Asn-197, and Asn-399 are each glycosylated (N-linked (GlcNAc...) asparagine). 15 helical membrane-spanning segments follow: residues 429–449, 459–479, 486–506, 523–543, 547–563, 567–587, 616–636, 651–671, 687–707, 715–735, 738–758, 762–782, 813–833, 853–873, and 887–907; these read LFPMIIGFLLLIIGGFNLALL, MSANMAPSVMKCLPVCLILIL, SPFPAEFYVLLPSFYILLNSF, FSIFITFLHVCSFGSNSFTVW, LCHFLIITIGLVMFCKC, MSPLFACSTYSALAFILLQVI, TLIVLALMALSSIILPLILQL, LSILYFFELISSIFWIAHHVF, SLANTYVICILGVLIWQFFLL, INVIERSYFVFALLYSFLSFL, PLGHLSLFSCFLQILLLIQLK, PSVGHNFFSVTLGLLGLSHFF, IFMFLHTVGAPILTCISIPLF, FSFILYNLLISTSTVFFAGFF, and FMLSGILLVTHQLFVLIQCFG.

This sequence belongs to the PIGG/PIGN/PIGO family. PIGO subfamily. Glycosylated.

Its subcellular location is the endoplasmic reticulum membrane. It functions in the pathway glycolipid biosynthesis; glycosylphosphatidylinositol-anchor biosynthesis. Functionally, involved in glycosylphosphatidylinositol-anchor biosynthesis. Transfers ethanolamine phosphate to the GPI third mannose which links the GPI-anchor to the C-terminus of the proteins by an amide bond. Involved in cell wall biosynthesis. In Schizosaccharomyces pombe (strain 972 / ATCC 24843) (Fission yeast), this protein is GPI ethanolamine phosphate transferase 3 (gpi13).